The sequence spans 95 residues: Fatty acid-binding protein, liver (95 aa).

Lys13 and Lys18 each carry N6-succinyllysine. Phosphoserine is present on Ser21. At Lys28 the chain carries N6-succinyllysine. Phosphothreonine is present on Thr33. Phosphoserine is present on Ser38. Residues Lys39, Lys47, and Lys59 each carry the N6-succinyllysine modification. A Phosphoserine modification is found at Ser69. Residue Lys90 is modified to N6-succinyllysine.

It belongs to the calycin superfamily. Fatty-acid binding protein (FABP) family. In terms of assembly, monomer.

It is found in the cytoplasm. In terms of biological role, this protein binds free fatty acids and their coenzyme A derivatives, bilirubin, and some other small molecules in the cytoplasm; it may be involved in intracellular lipid transport. This Chaetophractus villosus (South American armadillo) protein is Fatty acid-binding protein, liver (FABP1).